The following is a 90-amino-acid chain: Alpha-latrotoxin associated low molecular weight protein (90 aa).

The first 18 residues, 1 to 18, serve as a signal peptide directing secretion; it reads MNKLFFVVFLCLIISVLA.

This sequence belongs to the arthropod CHH/MIH/GIH/VIH hormone family. In terms of tissue distribution, expressed by the venom gland.

The protein localises to the secreted. May increase the toxicity of alpha-latrotoxin and/or other venom components. Is non-toxic to mice and to the cockroach Periplaneta americana. The protein is Alpha-latrotoxin associated low molecular weight protein of Latrodectus geometricus (Brown widow spider).